Reading from the N-terminus, the 73-residue chain is uncharacterized protein (73 aa).

This is an uncharacterized protein from Methanocaldococcus jannaschii (strain ATCC 43067 / DSM 2661 / JAL-1 / JCM 10045 / NBRC 100440) (Methanococcus jannaschii).